Reading from the N-terminus, the 307-residue chain is Elongation factor Ts (307 aa).

Residues 79–82 (TDFV) are involved in Mg(2+) ion dislocation from EF-Tu.

The protein belongs to the EF-Ts family.

It is found in the cytoplasm. Its function is as follows. Associates with the EF-Tu.GDP complex and induces the exchange of GDP to GTP. It remains bound to the aminoacyl-tRNA.EF-Tu.GTP complex up to the GTP hydrolysis stage on the ribosome. The chain is Elongation factor Ts from Sinorhizobium fredii (strain NBRC 101917 / NGR234).